The sequence spans 288 residues: Polyamine aminopropyltransferase (288 aa).

Residues 9–242 (SEWLDEYHQG…GLWSWTFASM (234 aa)) enclose the PABS domain. Residue Q36 coordinates S-methyl-5'-thioadenosine. Spermidine is bound by residues H67 and D91. S-methyl-5'-thioadenosine is bound by residues E111 and 143–144 (NG). Residue D162 is the Proton acceptor of the active site. P169 lines the S-methyl-5'-thioadenosine pocket.

It belongs to the spermidine/spermine synthase family. As to quaternary structure, homodimer or homotetramer.

Its subcellular location is the cytoplasm. The catalysed reaction is S-adenosyl 3-(methylsulfanyl)propylamine + putrescine = S-methyl-5'-thioadenosine + spermidine + H(+). The protein operates within amine and polyamine biosynthesis; spermidine biosynthesis; spermidine from putrescine: step 1/1. In terms of biological role, catalyzes the irreversible transfer of a propylamine group from the amino donor S-adenosylmethioninamine (decarboxy-AdoMet) to putrescine (1,4-diaminobutane) to yield spermidine. The protein is Polyamine aminopropyltransferase of Prochlorococcus marinus (strain NATL2A).